We begin with the raw amino-acid sequence, 206 residues long: Large ribosomal subunit protein uL3 (206 aa).

A disordered region spans residues 127–151; sequence SGGPSSHGSKFHRHLGGTGQATTPA.

This sequence belongs to the universal ribosomal protein uL3 family. Part of the 50S ribosomal subunit. Forms a cluster with proteins L14 and L19.

Its function is as follows. One of the primary rRNA binding proteins, it binds directly near the 3'-end of the 23S rRNA, where it nucleates assembly of the 50S subunit. The chain is Large ribosomal subunit protein uL3 from Borreliella burgdorferi (strain ATCC 35210 / DSM 4680 / CIP 102532 / B31) (Borrelia burgdorferi).